The chain runs to 443 residues: 23S rRNA (uracil(1939)-C(5))-methyltransferase RlmD (443 aa).

The TRAM domain maps to 12 to 70 (SKQLSAKVSLQVTRLDHLGAGIAQHNGKVVFIPGVLPGEKAMVQLTEQKKRYSRAKLLN). [4Fe-4S] cluster contacts are provided by Cys83, Cys89, Cys92, and Cys171. S-adenosyl-L-methionine contacts are provided by Gln277, Phe306, Asn311, Glu327, Asp354, and Asp374. The active-site Nucleophile is the Cys400.

It belongs to the class I-like SAM-binding methyltransferase superfamily. RNA M5U methyltransferase family. RlmD subfamily.

The enzyme catalyses uridine(1939) in 23S rRNA + S-adenosyl-L-methionine = 5-methyluridine(1939) in 23S rRNA + S-adenosyl-L-homocysteine + H(+). In terms of biological role, catalyzes the formation of 5-methyl-uridine at position 1939 (m5U1939) in 23S rRNA. This chain is 23S rRNA (uracil(1939)-C(5))-methyltransferase RlmD, found in Shewanella woodyi (strain ATCC 51908 / MS32).